The primary structure comprises 296 residues: Phosphoribosylaminoimidazole-succinocarboxamide synthase (296 aa).

The protein belongs to the SAICAR synthetase family.

The catalysed reaction is 5-amino-1-(5-phospho-D-ribosyl)imidazole-4-carboxylate + L-aspartate + ATP = (2S)-2-[5-amino-1-(5-phospho-beta-D-ribosyl)imidazole-4-carboxamido]succinate + ADP + phosphate + 2 H(+). The protein operates within purine metabolism; IMP biosynthesis via de novo pathway; 5-amino-1-(5-phospho-D-ribosyl)imidazole-4-carboxamide from 5-amino-1-(5-phospho-D-ribosyl)imidazole-4-carboxylate: step 1/2. In Thioalkalivibrio sulfidiphilus (strain HL-EbGR7), this protein is Phosphoribosylaminoimidazole-succinocarboxamide synthase.